The primary structure comprises 235 residues: Adenosine 5'-phosphosulfate reductase (235 aa).

C121, C122, C204, and C207 together coordinate [4Fe-4S] cluster. C230 serves as the catalytic Nucleophile; cysteine thiosulfonate intermediate.

It belongs to the PAPS reductase family. CysH subfamily. The cofactor is [4Fe-4S] cluster.

It is found in the cytoplasm. The enzyme catalyses [thioredoxin]-disulfide + sulfite + AMP + 2 H(+) = adenosine 5'-phosphosulfate + [thioredoxin]-dithiol. Its pathway is sulfur metabolism; hydrogen sulfide biosynthesis; sulfite from sulfate. Catalyzes the formation of sulfite from adenosine 5'-phosphosulfate (APS) using thioredoxin as an electron donor. The protein is Adenosine 5'-phosphosulfate reductase of Anoxybacillus flavithermus (strain DSM 21510 / WK1).